Consider the following 444-residue polypeptide: Probable galactarate/D-glucarate transporter GarP (444 aa).

Residues 1-11 are Cytoplasmic-facing; sequence MILDTVDEKKK. A helical membrane pass occupies residues 12–32; that stretch reads GVHTRYLILLIIFIVTAVNYA. At 33-56 the chain is on the periplasmic side; the sequence is DRATLSIAGTEVAKELQLSAVSMG. Residues 57-77 traverse the membrane as a helical segment; that stretch reads YIFSAFGWAYLLMQIPGGWLL. The Cytoplasmic portion of the chain corresponds to 78–89; it reads DKFGSKKVYTYS. A run of 2 helical transmembrane segments spans residues 90-110 and 111-131; these read LFFWSLFTFLQGFVDMFPLAW and AGISMFFMRFMLGFSEAPSFP. Residues 132-157 lie on the Cytoplasmic side of the membrane; sequence ANARIVAAWFPTKERGTASAIFNSAQ. The next 2 membrane-spanning stretches (helical) occupy residues 158–178 and 179–199; these read YFSLALFSPLLGWLTFAWGWE and HVFTVMGVIGFVLTALWIKLI. The Cytoplasmic portion of the chain corresponds to 200-252; sequence HNPTDHPRMSAEELKFISENGAVVDMDHKKPGSAAASGPKLHYIKQLLSNRMM. A helical membrane pass occupies residues 253 to 273; it reads LGVFFGQYFINTITWFFLTWF. The Periplasmic segment spans residues 274 to 288; the sequence is PIYLVQEKGMSILKV. The helical transmembrane segment at 289-309 threads the bilayer; sequence GLVASIPALCGFAGGVLGGVF. The Cytoplasmic segment spans residues 310-319; that stretch reads SDYLIKRGLS. Residues 320–340 form a helical membrane-spanning segment; sequence LTLARKLPIVLGMLLASTIIL. Residues 341–350 lie on the Periplasmic side of the membrane; sequence CNYTNNTTLV. A helical transmembrane segment spans residues 351-371; it reads VMLMALAFFGKGFGALGWPVI. The Cytoplasmic segment spans residues 372–385; that stretch reads SDTAPKEIVGLCGG. Residues 386 to 406 form a helical membrane-spanning segment; the sequence is VFNVFGNVASIVTPLVIGYLV. The Periplasmic portion of the chain corresponds to 407 to 413; it reads SELHSFN. A helical transmembrane segment spans residues 414-434; the sequence is AALVFVGCSALMAMVCYLFVV. The Cytoplasmic portion of the chain corresponds to 435 to 444; the sequence is GDIKRMELQK.

It belongs to the major facilitator superfamily. Phthalate permease family.

The protein localises to the cell inner membrane. The enzyme catalyses galactarate(in) + H(+)(in) = galactarate(out) + H(+)(out). It carries out the reaction D-glucarate(in) + H(+)(in) = D-glucarate(out) + H(+)(out). It catalyses the reaction (R)-glycerate(in) + H(+)(in) = (R)-glycerate(out) + H(+)(out). In terms of biological role, probably involved in the uptake of galactarate and/or D-glucarate. May also transport D-glycerate. The polypeptide is Probable galactarate/D-glucarate transporter GarP (Escherichia coli (strain K12)).